A 354-amino-acid polypeptide reads, in one-letter code: Virulence plasmid protein pGP2-D (354 aa).

The protein is Virulence plasmid protein pGP2-D of Chlamydia trachomatis serovar L2 (strain ATCC VR-902B / DSM 19102 / 434/Bu).